The primary structure comprises 130 residues: Small ribosomal subunit protein uS8 (130 aa).

The protein belongs to the universal ribosomal protein uS8 family. Part of the 30S ribosomal subunit. Contacts proteins S5 and S12.

Functionally, one of the primary rRNA binding proteins, it binds directly to 16S rRNA central domain where it helps coordinate assembly of the platform of the 30S subunit. The protein is Small ribosomal subunit protein uS8 of Stutzerimonas stutzeri (strain A1501) (Pseudomonas stutzeri).